We begin with the raw amino-acid sequence, 186 residues long: Protein C (186 aa).

The segment covering Met1 to Ser12 has biased composition (polar residues). Residues Met1 to Ala43 form a disordered region.

This sequence belongs to the morbillivirus protein C family. In terms of assembly, interacts with the phosphoprotein (via C-terminus); this interaction allows C to associate with the ribonucleocapsid.

The protein localises to the host nucleus. The protein resides in the host cytoplasmic vesicle. In terms of biological role, ribonucleocapsid-associated protein that interacts with the phosphoprotein (P), thereby increasing replication accuracy and processivity of the polymerase complex. The chain is Protein C (P/V/C) from Homo sapiens (Human).